Here is a 381-residue protein sequence, read N- to C-terminus: MAAGSASSLGGGAWPGSEAGDFLARYRQVSNKLKKRFLRKPNVAEAGEQFAQLARELRAQECLPYAAWCQLAVARCQQALFHGPGEALALTEAARLFLRQECDARQRLGCPAAYGEPLQAAASALGAAVRLHLELGQPAAAAALCLELAAALRAVGQPAAAAGHFQRAAQLHLPLMPLAALQALGDAASCQLLARDYTGALALFTRMQRLAREHGGHPVQQLELLPQPPSGPQPPLSGPQPRPVLGSTLPLPQPPDHAPGSVAPSPGTLGAFADVLVRCEVSRVLLLLLLQPPPAKLLPEHAQTLEKYSWEAFDGHGQDTSGQLPEELFLLLQSLVMAAQEKDTEGIKKLQVEMWPLLTAEQNHLLHLVLQETISPSGQGV.

A2 is modified (N-acetylalanine). The Nuclear localization signal signature appears at 34–36; that stretch reads KKR. The interval 221-265 is disordered; that stretch reads QLELLPQPPSGPQPPLSGPQPRPVLGSTLPLPQPPDHAPGSVAPS. Over residues 226-242 the composition is skewed to pro residues; sequence PQPPSGPQPPLSGPQPR.

As to quaternary structure, interacts with HTT (via C-terminus). Interacts with RAB5A. Found in a complex with F8A1/F8A2/F8A3, HTT and RAB5A; mediates the recruitment of HTT by RAB5A onto early endosomes. In terms of tissue distribution, produced abundantly in a wide variety of cell types.

The protein localises to the cytoplasm. It localises to the nucleus. Its subcellular location is the early endosome. It is found in the nuclear body. Functionally, RAB5A effector molecule that is involved in vesicular trafficking of early endosomes. Mediates the recruitment of HTT by RAB5A onto early endosomes. The HTT-F8A1/F8A2/F8A3-RAB5A complex stimulates early endosomal interaction with actin filaments and inhibits interaction with microtubules, leading to the reduction of endosome motility. This chain is 40-kDa huntingtin-associated protein (F8a1), found in Mus musculus (Mouse).